The sequence spans 551 residues: Adenylosuccinate synthetase (551 aa).

Residues 131–137 and 159–161 contribute to the GTP site; these read GDEGKGK and GHT. The active-site Proton acceptor is aspartate 132. 2 residues coordinate Mg(2+): aspartate 132 and glycine 159. IMP is bound by residues 132-135, 157-160, threonine 248, arginine 262, asparagine 339, threonine 354, and arginine 418; these read DEGK and NAGH. The Proton donor role is filled by histidine 160. Residue 414–420 coordinates substrate; sequence TTTGRAR. Residues arginine 420, 446–448, and 528–530 contribute to the GTP site; these read KLD and GVG.

The protein belongs to the adenylosuccinate synthetase family. In terms of assembly, homodimer. Mg(2+) is required as a cofactor.

The protein localises to the cytoplasm. It catalyses the reaction IMP + L-aspartate + GTP = N(6)-(1,2-dicarboxyethyl)-AMP + GDP + phosphate + 2 H(+). It functions in the pathway purine metabolism; AMP biosynthesis via de novo pathway; AMP from IMP: step 1/2. In terms of biological role, plays an important role in the de novo pathway and in the salvage pathway of purine nucleotide biosynthesis. Catalyzes the first committed step in the biosynthesis of AMP from IMP. This Phytophthora infestans (strain T30-4) (Potato late blight agent) protein is Adenylosuccinate synthetase.